The following is a 338-amino-acid chain: Anthranilate phosphoribosyltransferase (338 aa).

5-phospho-alpha-D-ribose 1-diphosphate is bound by residues Gly-81, 84-85 (GD), Thr-89, 91-94 (NIST), 109-117 (KHGNRSMVS), and Ser-121. Gly-81 serves as a coordination point for anthranilate. Ser-93 provides a ligand contact to Mg(2+). Asn-112 contributes to the anthranilate binding site. Residue Arg-167 participates in anthranilate binding. Positions 226 and 227 each coordinate Mg(2+).

This sequence belongs to the anthranilate phosphoribosyltransferase family. Homodimer. Mg(2+) serves as cofactor.

The catalysed reaction is N-(5-phospho-beta-D-ribosyl)anthranilate + diphosphate = 5-phospho-alpha-D-ribose 1-diphosphate + anthranilate. Its pathway is amino-acid biosynthesis; L-tryptophan biosynthesis; L-tryptophan from chorismate: step 2/5. Catalyzes the transfer of the phosphoribosyl group of 5-phosphorylribose-1-pyrophosphate (PRPP) to anthranilate to yield N-(5'-phosphoribosyl)-anthranilate (PRA). The protein is Anthranilate phosphoribosyltransferase of Acidithiobacillus ferrooxidans (strain ATCC 23270 / DSM 14882 / CIP 104768 / NCIMB 8455) (Ferrobacillus ferrooxidans (strain ATCC 23270)).